Consider the following 449-residue polypeptide: MREIVHVQGGQCGNQIGAKFWEVISDEHGIAPTGTYKGDSDLQLERISVFYNEATGGRYVPRAVLMDLEPGTMDSVRSGPFGQLFRPDNFVFGQTGAGNNWAKGHYTEGAELIDSVLDVVRKEAEGCDCLQGFQVTHSLGGGTGSGMGTLLISKVREEYPDRIMETFSVFPSPKVSDTVVEPYNATLSVHQLVENADEVQVIDNEALYDICFRTLKLTTPTYGDLNHLVSAAMSGVTCSLRFPGQLNSDLRKLAVNLVPFPRLHFFLIGFAPLTSRGSQQYRALTVPELTQQMFDAKNMMCASDPRHGRYLTACALFRGRMSTKEVDEQMLNVQNKNSSYFVEWIPNNMKSGVCDIPPKGLKMSVTFVGNSTAIQEMFKRVSDQFTAMFRRKAFLHWYTGEGMDEMEFTEAESNMNDLVSEYQQYQDATAEEEGEFDEEEGVMDAEGAA.

The GTP site is built by Q11, E69, S138, G142, T143, G144, N204, and N226. E69 contributes to the Mg(2+) binding site. The segment at Q426–A449 is disordered. A compositionally biased stretch (acidic residues) spans T429–M443.

It belongs to the tubulin family. As to quaternary structure, dimer of alpha and beta chains. A typical microtubule is a hollow water-filled tube with an outer diameter of 25 nm and an inner diameter of 15 nM. Alpha-beta heterodimers associate head-to-tail to form protofilaments running lengthwise along the microtubule wall with the beta-tubulin subunit facing the microtubule plus end conferring a structural polarity. Microtubules usually have 13 protofilaments but different protofilament numbers can be found in some organisms and specialized cells. Requires Mg(2+) as cofactor.

Its subcellular location is the cytoplasm. The protein localises to the cytoskeleton. In terms of biological role, tubulin is the major constituent of microtubules, a cylinder consisting of laterally associated linear protofilaments composed of alpha- and beta-tubulin heterodimers. Microtubules grow by the addition of GTP-tubulin dimers to the microtubule end, where a stabilizing cap forms. Below the cap, tubulin dimers are in GDP-bound state, owing to GTPase activity of alpha-tubulin. The chain is Tubulin beta chain from Eimeria tenella (Coccidian parasite).